Reading from the N-terminus, the 397-residue chain is Acetate kinase (397 aa).

Residue Asn7 coordinates Mg(2+). Residue Lys14 participates in ATP binding. Arg91 provides a ligand contact to substrate. Asp148 (proton donor/acceptor) is an active-site residue. ATP is bound by residues 208 to 212 (HLGNG), 283 to 285 (DFR), and 331 to 335 (GIGEN). Residue Glu384 participates in Mg(2+) binding.

It belongs to the acetokinase family. As to quaternary structure, homodimer. Requires Mg(2+) as cofactor. It depends on Mn(2+) as a cofactor.

It is found in the cytoplasm. The catalysed reaction is acetate + ATP = acetyl phosphate + ADP. It functions in the pathway metabolic intermediate biosynthesis; acetyl-CoA biosynthesis; acetyl-CoA from acetate: step 1/2. Functionally, catalyzes the formation of acetyl phosphate from acetate and ATP. Can also catalyze the reverse reaction. This is Acetate kinase from Treponema denticola (strain ATCC 35405 / DSM 14222 / CIP 103919 / JCM 8153 / KCTC 15104).